We begin with the raw amino-acid sequence, 333 residues long: Receptor polysaccharide phosphotransferase WefC (333 aa).

This sequence belongs to the stealth family.

Its function is as follows. Part of the type 2Gn receptor polysaccharide (RPS) biosynthesis locus. Essential for cell surface RPS production, and for synthesis of the host-like GalNAc beta 1-3Gal (Gn) motif of the RPS. Probably encodes a 1-3Gal alpha transferase. The polypeptide is Receptor polysaccharide phosphotransferase WefC (wefC) (Streptococcus gordonii).